The primary structure comprises 181 residues: NADH-quinone oxidoreductase subunit I (181 aa).

4Fe-4S ferredoxin-type domains are found at residues 52 to 81 and 91 to 120; these read TRDSAGHERCVACNLCAVSCPVGCISLKKS and EFFRINFSRCIFCGMCEEACPTAAIQLISD. [4Fe-4S] cluster contacts are provided by cysteine 61, cysteine 64, cysteine 67, cysteine 71, cysteine 100, cysteine 103, cysteine 106, and cysteine 110.

The protein belongs to the complex I 23 kDa subunit family. In terms of assembly, NDH-1 is composed of 13 different subunits. Subunits NuoA, H, J, K, L, M, N constitute the membrane sector of the complex. [4Fe-4S] cluster is required as a cofactor.

It localises to the cell inner membrane. The catalysed reaction is a quinone + NADH + 5 H(+)(in) = a quinol + NAD(+) + 4 H(+)(out). In terms of biological role, NDH-1 shuttles electrons from NADH, via FMN and iron-sulfur (Fe-S) centers, to quinones in the respiratory chain. The immediate electron acceptor for the enzyme in this species is believed to be ubiquinone. Couples the redox reaction to proton translocation (for every two electrons transferred, four hydrogen ions are translocated across the cytoplasmic membrane), and thus conserves the redox energy in a proton gradient. The sequence is that of NADH-quinone oxidoreductase subunit I from Blochmanniella floridana.